The sequence spans 88 residues: Small ribosomal subunit protein bS20 (88 aa).

It belongs to the bacterial ribosomal protein bS20 family.

Functionally, binds directly to 16S ribosomal RNA. In Brucella abortus (strain S19), this protein is Small ribosomal subunit protein bS20.